An 860-amino-acid polypeptide reads, in one-letter code: DNA mismatch repair protein MutS (860 aa).

607-614 (GPNMSGKS) serves as a coordination point for ATP.

It belongs to the DNA mismatch repair MutS family.

Its function is as follows. This protein is involved in the repair of mismatches in DNA. It is possible that it carries out the mismatch recognition step. This protein has a weak ATPase activity. The protein is DNA mismatch repair protein MutS of Listeria welshimeri serovar 6b (strain ATCC 35897 / DSM 20650 / CCUG 15529 / CIP 8149 / NCTC 11857 / SLCC 5334 / V8).